The following is a 78-amino-acid chain: Sec-independent protein translocase protein TatA (78 aa).

The chain crosses the membrane as a helical span at residues 1–21 (MGGISIWQLLIIAVIVVLLFG). Positions 47–59 (ESEKKDADFEPKS) are enriched in basic and acidic residues. The interval 47-78 (ESEKKDADFEPKSLEQQSKQAATESKKDKEQA) is disordered. Residues 60–69 (LEQQSKQAAT) are compositionally biased toward polar residues.

This sequence belongs to the TatA/E family. As to quaternary structure, the Tat system comprises two distinct complexes: a TatABC complex, containing multiple copies of TatA, TatB and TatC subunits, and a separate TatA complex, containing only TatA subunits. Substrates initially bind to the TatABC complex, which probably triggers association of the separate TatA complex to form the active translocon.

Its subcellular location is the cell inner membrane. Part of the twin-arginine translocation (Tat) system that transports large folded proteins containing a characteristic twin-arginine motif in their signal peptide across membranes. TatA could form the protein-conducting channel of the Tat system. This chain is Sec-independent protein translocase protein TatA, found in Vibrio vulnificus (strain CMCP6).